The chain runs to 425 residues: Dihydroorotase (425 aa).

His-56 and His-58 together coordinate Zn(2+). Residues 58 to 60 and Asn-90 contribute to the substrate site; that span reads HYR. The Zn(2+) site is built by Asp-148, His-175, and His-228. Asn-274 is a binding site for substrate. Asp-301 contributes to the Zn(2+) binding site. Asp-301 is a catalytic residue. Substrate is bound by residues His-305 and 319–320; that span reads FG.

The protein belongs to the metallo-dependent hydrolases superfamily. DHOase family. Class I DHOase subfamily. The cofactor is Zn(2+).

It carries out the reaction (S)-dihydroorotate + H2O = N-carbamoyl-L-aspartate + H(+). Its pathway is pyrimidine metabolism; UMP biosynthesis via de novo pathway; (S)-dihydroorotate from bicarbonate: step 3/3. Functionally, catalyzes the reversible cyclization of carbamoyl aspartate to dihydroorotate. This is Dihydroorotase from Lactobacillus acidophilus (strain ATCC 700396 / NCK56 / N2 / NCFM).